The primary structure comprises 465 residues: Alpha-2A adrenergic receptor (465 aa).

At M1 to T48 the chain is on the extracellular side. N-linked (GlcNAc...) asparagine glycosylation is found at N25 and N29. The chain crosses the membrane as a helical span at residues L49–F74. Residues T75–L85 are Cytoplasmic-facing. Residues F86–M111 form a helical membrane-spanning segment. At G112 to C121 the chain is on the extracellular side. Cysteines 121 and 203 form a disulfide. Residues E122–L144 form a helical membrane-spanning segment. Topologically, residues D145–R164 are cytoplasmic. A helical membrane pass occupies residues I165–E188. Topologically, residues K189 to D207 are extracellular. A helical transmembrane segment spans residues Q208 to V232. Over R233–F389 the chain is Cytoplasmic. The segment at T242 to W377 is disordered. Positions S313 to P330 are enriched in basic and acidic residues. Position 346 is a phosphoserine (S346). Residue R368 is modified to Omega-N-methylarginine. The chain crosses the membrane as a helical span at residues V390 to V414. Topologically, residues G415–K424 are extracellular. A helical membrane pass occupies residues F425 to N445. Over H446–V465 the chain is Cytoplasmic. C457 carries the S-palmitoyl cysteine lipid modification.

The protein belongs to the G-protein coupled receptor 1 family. Adrenergic receptor subfamily. ADRA2A sub-subfamily.

The protein localises to the cell membrane. Its function is as follows. Alpha-2 adrenergic receptors mediate the catecholamine-induced inhibition of adenylate cyclase through the action of G proteins. The protein is Alpha-2A adrenergic receptor of Sus scrofa (Pig).